An 85-amino-acid polypeptide reads, in one-letter code: Augerpeptide-s6a (85 aa).

The first 20 residues, 1–20 (MTLTMSTVVFFSLILLTLGL), serve as a signal peptide directing secretion. Residues 21–43 (QPKDKDEGVMGRSRLGKRGLLMR) constitute a propeptide that is removed on maturation. 3 cysteine pairs are disulfide-bonded: cysteine 54/cysteine 65, cysteine 58/cysteine 70, and cysteine 64/cysteine 81.

Expressed by the venom duct.

It localises to the secreted. This Terebra subulata (Chocolate spotted auger) protein is Augerpeptide-s6a.